Reading from the N-terminus, the 1176-residue chain is Leucine--tRNA ligase, cytoplasmic (1176 aa).

2 residues coordinate L-leucine: Y52 and Y54. Residues 60-63 (HLGH) carry the 'HIGH' region motif. S167 is modified (phosphoserine). An editing domain region spans residues 260–509 (GPQEYTLLKL…DAGDALIYME (250 aa)). L-leucine-binding residues include L594 and S597. Residues 716 to 720 (KMSKS) carry the 'KMSKS' region motif. K719 serves as a coordination point for ATP. Phosphoserine is present on S720. N6-acetyllysine is present on residues K970 and K1047.

It belongs to the class-I aminoacyl-tRNA synthetase family. In terms of assembly, part of the aminoacyl-tRNA synthetase multienzyme complex, also known as multisynthetase complex (MSC), that is composed of the aminoacyl-tRNA ligases for Arg (RARS1), Asp (DARS1), Gln (QARS1), Ile (IARS1), Leu (LARS1), Lys (KARS1), Met (MARS1) the bifunctional ligase for Glu and Pro (EPRS1) and the auxiliary subunits AIMP1/p43, AIMP2/p38 and EEF1E1/p18.

Its subcellular location is the cytoplasm. The catalysed reaction is tRNA(Leu) + L-leucine + ATP = L-leucyl-tRNA(Leu) + AMP + diphosphate. It carries out the reaction L-methionyl-tRNA(Leu) + H2O = tRNA(Leu) + L-methionine + H(+). 5-fluoro-1,3-dihydro-1-hydroxy-1,2-benzoxaborole inhibits LARS1 by forming a covalent adduct with the 3' adenosine of tRNA(Leu) at the editing site, thus locking the enzyme in an inactive conformation. Functionally, aminoacyl-tRNA synthetase that catalyzes the specific attachment of leucine to its cognate tRNA (tRNA(Leu)). It performs tRNA aminoacylation in a two-step reaction: Leu is initially activated by ATP to form a leucyl-adenylate (Leu-AMP) intermediate; then the leucyl moiety is transferred to the acceptor 3' end of the tRNA to yield leucyl-tRNA. To improve the fidelity of catalytic reactions, it is also able to hydrolyze misactivated aminoacyl-adenylate intermediates (pre-transfer editing) and mischarged aminoacyl-tRNAs (post-transfer editing). This chain is Leucine--tRNA ligase, cytoplasmic, found in Homo sapiens (Human).